A 312-amino-acid polypeptide reads, in one-letter code: D-alanine--D-alanine ligase (312 aa).

The 201-residue stretch at 103–303 folds into the ATP-grasp domain; it reads KQQLVPHGIR…YADLVQAIVD (201 aa). Residue 130–186 participates in ATP binding; the sequence is MPRPYVLKPVNEGSSVGVAIIKERDNHGVPIHRDSHGPWQTFATLLAEPFIRGRELT. Asp-254, Glu-270, and Asn-272 together coordinate Mg(2+).

The protein belongs to the D-alanine--D-alanine ligase family. Requires Mg(2+) as cofactor. Mn(2+) serves as cofactor.

The protein localises to the cytoplasm. It catalyses the reaction 2 D-alanine + ATP = D-alanyl-D-alanine + ADP + phosphate + H(+). The protein operates within cell wall biogenesis; peptidoglycan biosynthesis. Its function is as follows. Cell wall formation. This chain is D-alanine--D-alanine ligase, found in Rhizorhabdus wittichii (strain DSM 6014 / CCUG 31198 / JCM 15750 / NBRC 105917 / EY 4224 / RW1) (Sphingomonas wittichii).